The primary structure comprises 202 residues: Imidazoleglycerol-phosphate dehydratase (202 aa).

Belongs to the imidazoleglycerol-phosphate dehydratase family.

It localises to the cytoplasm. The enzyme catalyses D-erythro-1-(imidazol-4-yl)glycerol 3-phosphate = 3-(imidazol-4-yl)-2-oxopropyl phosphate + H2O. It participates in amino-acid biosynthesis; L-histidine biosynthesis; L-histidine from 5-phospho-alpha-D-ribose 1-diphosphate: step 6/9. The sequence is that of Imidazoleglycerol-phosphate dehydratase from Nocardioides sp. (strain ATCC BAA-499 / JS614).